Reading from the N-terminus, the 60-residue chain is UPF0337 protein SACOL1680 (60 aa).

It belongs to the UPF0337 (CsbD) family.

The protein is UPF0337 protein SACOL1680 of Staphylococcus aureus (strain COL).